The primary structure comprises 248 residues: MSDGEQAKSRRRRGRRRGRRAAATAENHMDAQPAGDATPTPATAKRSRSRSPRRGSTRMRTVHETSAGGLVIDGIDGPRDAQVAALIGRVDRRGRLLWSLPKGHIELGETAEQTAIREVAEETGIRGSVLAALGRIDYWFVTDGRRVHKTVHHYLMRFLGGELSDEDLEVAEVAWVPIRELPSRLAYADERRLAEVADELIDKLQSDGPAALPPLPPSSPRRRPQTHSRARHADDSAPGQHNGPGPGP.

Residues 1–64 (MSDGEQAKSR…GSTRMRTVHE (64 aa)) are disordered. Over residues 9–20 (SRRRRGRRRGRR) the composition is skewed to basic residues. A compositionally biased stretch (low complexity) spans 31 to 44 (AQPAGDATPTPATA). Positions 45 to 57 (KRSRSRSPRRGST) are enriched in basic residues. The region spanning 62–198 (VHETSAGGLV…DERRLAEVAD (137 aa)) is the Nudix hydrolase domain. Mg(2+) is bound by residues Gly103, Glu118, Glu121, and Glu122. Positions 103–124 (GHIELGETAEQTAIREVAEETG) match the Nudix box motif. The disordered stretch occupies residues 204–248 (LQSDGPAALPPLPPSSPRRRPQTHSRARHADDSAPGQHNGPGPGP). Residues 220–230 (PRRRPQTHSRA) show a composition bias toward basic residues.

It belongs to the Nudix hydrolase family. Mg(2+) is required as a cofactor. Requires Mn(2+) as cofactor.

May be involved in the GO system responsible for removing an oxidatively damaged form of guanine (7,8-dihydro-8-oxoguanine, 8-oxo-dGTP) from DNA and the nucleotide pool. The polypeptide is Putative mutator protein MutT4 (mutT4) (Mycobacterium tuberculosis (strain CDC 1551 / Oshkosh)).